The sequence spans 1178 residues: DNA-directed RNA polymerase subunit beta' (1178 aa).

The Zn(2+) site is built by C60, C62, C75, and C78. D450, D452, and D454 together coordinate Mg(2+). Zn(2+) is bound by residues C795, C869, C876, and C879.

The protein belongs to the RNA polymerase beta' chain family. The RNAP catalytic core consists of 2 alpha, 1 beta, 1 beta' and 1 omega subunit. When a sigma factor is associated with the core the holoenzyme is formed, which can initiate transcription. It depends on Mg(2+) as a cofactor. Zn(2+) serves as cofactor.

The catalysed reaction is RNA(n) + a ribonucleoside 5'-triphosphate = RNA(n+1) + diphosphate. In terms of biological role, DNA-dependent RNA polymerase catalyzes the transcription of DNA into RNA using the four ribonucleoside triphosphates as substrates. In Clostridium botulinum (strain ATCC 19397 / Type A), this protein is DNA-directed RNA polymerase subunit beta'.